The chain runs to 429 residues: MANVTIIGAQWGDEGKGKVVDWLASRADVVVRFQGGHNAGHTLVVGNQTYKLSLLPSGLVRGKLGVIGNGVVVDPVALLAEIGRVREQGLNVTPETLRIADNAPLILPLHAALDAAREAARGARRIGTTGRGIGPAYEDKVARRAIRICDLAEPETLDWRLDELLLHHNTLLAGLGAPTFGKAELMDQLLALAPQILPFAEPVWERLAEAKKSGARILFEGAQAVMLDVDHGTYPFVTSSNTVSGQIAAGAGVGPDAAGRVLGIAKAYSTRVGSGPFPTEQDNETGRLLGERGHEFGTVTGRARRCGWFDAALVRQAVKVGGIQGLALTKLDVLDGMTTLQIGVGYRIGGETLPHLPPGAAAQAKAEPVYETIEGWSGSTRGARSYADLPAQAIKYVRRIEELVECPVTLLSTSPERDDTILMQDPFAD.

Residues 12-18 (GDEGKGK) and 40-42 (GHT) contribute to the GTP site. Asp-13 (proton acceptor) is an active-site residue. Positions 13 and 40 each coordinate Mg(2+). IMP contacts are provided by residues 13 to 16 (DEGK), 38 to 41 (NAGH), Thr-129, Arg-143, Gln-223, Thr-238, and Arg-302. His-41 functions as the Proton donor in the catalytic mechanism. 298–304 (TVTGRAR) is a binding site for substrate. GTP-binding positions include Arg-304, 330-332 (KLD), and 412-414 (STS).

Belongs to the adenylosuccinate synthetase family. In terms of assembly, homodimer. It depends on Mg(2+) as a cofactor.

The protein localises to the cytoplasm. It catalyses the reaction IMP + L-aspartate + GTP = N(6)-(1,2-dicarboxyethyl)-AMP + GDP + phosphate + 2 H(+). Its pathway is purine metabolism; AMP biosynthesis via de novo pathway; AMP from IMP: step 1/2. In terms of biological role, plays an important role in the de novo pathway of purine nucleotide biosynthesis. Catalyzes the first committed step in the biosynthesis of AMP from IMP. The sequence is that of Adenylosuccinate synthetase from Acidiphilium cryptum (strain JF-5).